The primary structure comprises 326 residues: Vitamin B12 import system permease protein BtuC (326 aa).

Transmembrane regions (helical) follow at residues Leu-19–Leu-39, Leu-61–Phe-81, Pro-88–Gly-108, Leu-112–Leu-132, Leu-146–Phe-166, Gly-184–Ile-204, Gly-240–Ile-260, Val-274–Ala-294, and Glu-302–Leu-322.

The protein belongs to the binding-protein-dependent transport system permease family. FecCD subfamily. In terms of assembly, the complex is composed of two ATP-binding proteins (BtuD), two transmembrane proteins (BtuC) and a solute-binding protein (BtuF).

It localises to the cell inner membrane. Part of the ABC transporter complex BtuCDF involved in vitamin B12 import. Involved in the translocation of the substrate across the membrane. The chain is Vitamin B12 import system permease protein BtuC from Escherichia coli O127:H6 (strain E2348/69 / EPEC).